The sequence spans 338 residues: MTTRTISPEKTDDDYVESSLRPRALEDYIGQEKAKGNLRVFIDAARKRGEALDHVLLYGPPGLGKTTLANIIACEMGVNIKSTSGPVIERPGDLAAILTNLEPHDVLFIDEIHRLSHVVEEILYPAMEDFQLDIIIGQGPSARTIKLDLPRFTLVGATTRAGLLSSPLRDRFGVISRLEFYTDAELSTIVTRSAHILDIQIEPDGARELARRSRGTPRIANRLLRRVRDFAQVRADGVISAQVVDESLKLLEIDEKGFDQMDRTIMLTIIDKFGGGPVGLDTIAAAIGEERDTIEDVYEPFLIQHGFINRTPRGRVATKSAYEHFGRIAPAPGQGALF.

Positions 1 to 181 are large ATPase domain (RuvB-L); sequence MTTRTISPEK…FGVISRLEFY (181 aa). ATP is bound by residues leucine 20, arginine 21, glycine 62, lysine 65, threonine 66, threonine 67, 128–130, arginine 171, tyrosine 181, and arginine 218; that span reads EDF. Threonine 66 lines the Mg(2+) pocket. Residues 182–252 are small ATPAse domain (RuvB-S); it reads TDAELSTIVT…VVDESLKLLE (71 aa). The head domain (RuvB-H) stretch occupies residues 255 to 338; that stretch reads EKGFDQMDRT…APAPGQGALF (84 aa). Residues arginine 291, arginine 310, and arginine 315 each coordinate DNA.

It belongs to the RuvB family. In terms of assembly, homohexamer. Forms an RuvA(8)-RuvB(12)-Holliday junction (HJ) complex. HJ DNA is sandwiched between 2 RuvA tetramers; dsDNA enters through RuvA and exits via RuvB. An RuvB hexamer assembles on each DNA strand where it exits the tetramer. Each RuvB hexamer is contacted by two RuvA subunits (via domain III) on 2 adjacent RuvB subunits; this complex drives branch migration. In the full resolvosome a probable DNA-RuvA(4)-RuvB(12)-RuvC(2) complex forms which resolves the HJ.

It localises to the cytoplasm. The enzyme catalyses ATP + H2O = ADP + phosphate + H(+). Its function is as follows. The RuvA-RuvB-RuvC complex processes Holliday junction (HJ) DNA during genetic recombination and DNA repair, while the RuvA-RuvB complex plays an important role in the rescue of blocked DNA replication forks via replication fork reversal (RFR). RuvA specifically binds to HJ cruciform DNA, conferring on it an open structure. The RuvB hexamer acts as an ATP-dependent pump, pulling dsDNA into and through the RuvAB complex. RuvB forms 2 homohexamers on either side of HJ DNA bound by 1 or 2 RuvA tetramers; 4 subunits per hexamer contact DNA at a time. Coordinated motions by a converter formed by DNA-disengaged RuvB subunits stimulates ATP hydrolysis and nucleotide exchange. Immobilization of the converter enables RuvB to convert the ATP-contained energy into a lever motion, pulling 2 nucleotides of DNA out of the RuvA tetramer per ATP hydrolyzed, thus driving DNA branch migration. The RuvB motors rotate together with the DNA substrate, which together with the progressing nucleotide cycle form the mechanistic basis for DNA recombination by continuous HJ branch migration. Branch migration allows RuvC to scan DNA until it finds its consensus sequence, where it cleaves and resolves cruciform DNA. The chain is Holliday junction branch migration complex subunit RuvB from Geobacter sulfurreducens (strain ATCC 51573 / DSM 12127 / PCA).